Reading from the N-terminus, the 147-residue chain is Transthyretin (147 aa).

Positions 1–20 (MASHRLLLLCLAGLVFVSEA) are cleaved as a signal peptide. C30 carries the sulfocysteine modification. Position 35 (K35) interacts with L-thyroxine. At S72 the chain carries Phosphoserine. E74 contacts L-thyroxine. N118 carries an N-linked (GlcNAc...) asparagine glycan. S137 is a binding site for L-thyroxine.

This sequence belongs to the transthyretin family. In terms of assembly, homotetramer. Dimer of dimers. In the homotetramer, subunits assemble around a central channel that can accommodate two ligand molecules. Interacts with RBP4. Sulfonation of the reactive cysteine Cys-30 enhances the stability of the native conformation of TTR, avoiding misassembly of the protein leading to amyloid formation.

It is found in the secreted. Its function is as follows. Thyroid hormone-binding protein. Probably transports thyroxine from the bloodstream to the brain. This is Transthyretin (TTR) from Macaca fascicularis (Crab-eating macaque).